We begin with the raw amino-acid sequence, 280 residues long: Lysosome-associated membrane glycoprotein 5 (280 aa).

Residues methionine 1–alanine 29 form the signal peptide. The Extracellular segment spans residues glutamate 30 to glutamate 235. 3 N-linked (GlcNAc...) asparagine glycosylation sites follow: asparagine 35, asparagine 53, and asparagine 127. The chain crosses the membrane as a helical span at residues threonine 236–tyrosine 256. At histidine 257–glycine 280 the chain is on the cytoplasmic side.

The protein belongs to the LAMP family. Glycosylated. As to expression, expressed in plasmocytoid dendritic cells. Expressed in suprabasal skin keratinocytes and squamous cells (at protein level). Expressed in the brain and weakly in spleen and skin. Expressed in plasmocytoid dendritic cells.

It is found in the cell membrane. The protein localises to the cytoplasmic vesicle. Its subcellular location is the secretory vesicle. It localises to the synaptic vesicle membrane. The protein resides in the endoplasmic reticulum-Golgi intermediate compartment membrane. It is found in the endosome membrane. The protein localises to the cytoplasmic vesicle membrane. Its subcellular location is the cell projection. It localises to the dendrite. The protein resides in the growth cone membrane. It is found in the early endosome membrane. The protein localises to the recycling endosome. In terms of biological role, plays a role in short-term synaptic plasticity in a subset of GABAergic neurons in the brain. This chain is Lysosome-associated membrane glycoprotein 5 (LAMP5), found in Homo sapiens (Human).